We begin with the raw amino-acid sequence, 23 residues long: Coenzyme PQQ synthesis protein A (23 aa).

The pyrroloquinoline quinone (Glu-Tyr) cross-link spans 15–19 (EVTMY).

The protein belongs to the PqqA family.

It participates in cofactor biosynthesis; pyrroloquinoline quinone biosynthesis. Functionally, required for coenzyme pyrroloquinoline quinone (PQQ) biosynthesis. PQQ is probably formed by cross-linking a specific glutamate to a specific tyrosine residue and excising these residues from the peptide. In Ectopseudomonas mendocina (strain ymp) (Pseudomonas mendocina), this protein is Coenzyme PQQ synthesis protein A.